A 467-amino-acid chain; its full sequence is Rhamnulokinase (467 aa).

11–15 (ASSGR) contacts ATP. Residues Ala-78 and 235–237 (HDT) each bind substrate. Asp-236 serves as the catalytic Proton acceptor. Thr-257 lines the ATP pocket. Asn-294 serves as a coordination point for substrate. Gln-302 is an ATP binding site. Cysteines 351 and 368 form a disulfide. Gly-400 provides a ligand contact to ATP.

Belongs to the rhamnulokinase family. It depends on Mg(2+) as a cofactor.

It carries out the reaction L-rhamnulose + ATP = L-rhamnulose 1-phosphate + ADP + H(+). Its pathway is carbohydrate degradation; L-rhamnose degradation; glycerone phosphate from L-rhamnose: step 2/3. In terms of biological role, involved in the catabolism of L-rhamnose (6-deoxy-L-mannose). Catalyzes the transfer of the gamma-phosphate group from ATP to the 1-hydroxyl group of L-rhamnulose to yield L-rhamnulose 1-phosphate. The polypeptide is Rhamnulokinase (Halalkalibacterium halodurans (strain ATCC BAA-125 / DSM 18197 / FERM 7344 / JCM 9153 / C-125) (Bacillus halodurans)).